A 1556-amino-acid chain; its full sequence is uncharacterized protein (1556 aa).

This is an uncharacterized protein from Ictalurid herpesvirus 1 (strain Auburn) (IcHV-1).